Here is a 467-residue protein sequence, read N- to C-terminus: Light-independent protochlorophyllide reductase subunit N (467 aa).

Residues C23, C48, and C108 each coordinate [4Fe-4S] cluster.

It belongs to the BchN/ChlN family. Protochlorophyllide reductase is composed of three subunits; ChlL, ChlN and ChlB. Forms a heterotetramer of two ChlB and two ChlN subunits. The cofactor is [4Fe-4S] cluster.

The enzyme catalyses chlorophyllide a + oxidized 2[4Fe-4S]-[ferredoxin] + 2 ADP + 2 phosphate = protochlorophyllide a + reduced 2[4Fe-4S]-[ferredoxin] + 2 ATP + 2 H2O. It functions in the pathway porphyrin-containing compound metabolism; chlorophyll biosynthesis (light-independent). In terms of biological role, component of the dark-operative protochlorophyllide reductase (DPOR) that uses Mg-ATP and reduced ferredoxin to reduce ring D of protochlorophyllide (Pchlide) to form chlorophyllide a (Chlide). This reaction is light-independent. The NB-protein (ChlN-ChlB) is the catalytic component of the complex. The protein is Light-independent protochlorophyllide reductase subunit N of Trichormus variabilis (strain ATCC 29413 / PCC 7937) (Anabaena variabilis).